Consider the following 323-residue polypeptide: Pantothenate kinase (323 aa).

101-108 (GSVAVGKS) serves as a coordination point for ATP.

The protein belongs to the prokaryotic pantothenate kinase family.

Its subcellular location is the cytoplasm. The enzyme catalyses (R)-pantothenate + ATP = (R)-4'-phosphopantothenate + ADP + H(+). It functions in the pathway cofactor biosynthesis; coenzyme A biosynthesis; CoA from (R)-pantothenate: step 1/5. In Xanthobacter autotrophicus (strain ATCC BAA-1158 / Py2), this protein is Pantothenate kinase.